A 316-amino-acid chain; its full sequence is Coproporphyrin III ferrochelatase (316 aa).

Residues tyrosine 13, arginine 30, 46–47, serine 54, and tyrosine 125 contribute to the Fe-coproporphyrin III site; that span reads RY. Fe(2+) contacts are provided by histidine 183 and glutamate 264.

This sequence belongs to the ferrochelatase family.

Its subcellular location is the cytoplasm. It catalyses the reaction Fe-coproporphyrin III + 2 H(+) = coproporphyrin III + Fe(2+). Its pathway is porphyrin-containing compound metabolism; protoheme biosynthesis. In terms of biological role, involved in coproporphyrin-dependent heme b biosynthesis. Catalyzes the insertion of ferrous iron into coproporphyrin III to form Fe-coproporphyrin III. The chain is Coproporphyrin III ferrochelatase from Geobacillus thermodenitrificans (strain NG80-2).